The chain runs to 387 residues: Alkanesulfonate monooxygenase (387 aa).

The segment at 365–387 is disordered; sequence HNSGPFGETVGNDYRPSRLASQS.

It belongs to the SsuD family.

The catalysed reaction is an alkanesulfonate + FMNH2 + O2 = an aldehyde + FMN + sulfite + H2O + 2 H(+). Its function is as follows. Catalyzes the desulfonation of aliphatic sulfonates. This is Alkanesulfonate monooxygenase from Bradyrhizobium diazoefficiens (strain JCM 10833 / BCRC 13528 / IAM 13628 / NBRC 14792 / USDA 110).